The chain runs to 293 residues: Beta-lactamase (293 aa).

The signal sequence occupies residues 1-27 (MRFTATVLSRVATGLALGLSMATASLA). Catalysis depends on serine 74, which acts as the Acyl-ester intermediate. 238–240 (KSG) contributes to the substrate binding site.

Belongs to the class-A beta-lactamase family.

The protein resides in the periplasm. It carries out the reaction a beta-lactam + H2O = a substituted beta-amino acid. Its function is as follows. Hydrolyzes beta-lactams antibiotics. Rates of hydrolysis relative to benzylpenicillin =100: ampicillin = 27, carbenicillin = 25, cloxacillin = 0, cephaloridine = 4. This chain is Beta-lactamase, found in Rhodobacter capsulatus (Rhodopseudomonas capsulata).